Reading from the N-terminus, the 510-residue chain is Lysine-specific demethylase 4D (510 aa).

The JmjN domain occupies 15–57; it reads IMIFRPTKEEFNDFDKYIAYMESQGAHRAGLAKVIPPKEWRAR. A polyADP-ribosyl glutamic acid mark is found at Glu-23 and Glu-24. Residue Tyr-133 participates in 2-oxoglutarate binding. One can recognise a JmjC domain in the interval 143 to 309; sequence DGKTQQWNVG…YGKVASQCSC (167 aa). Residues His-189 and Glu-191 each coordinate Fe cation. 2-oxoglutarate is bound by residues Asn-199 and Lys-207. Zn(2+)-binding residues include Cys-235 and His-241. Lys-242 is a 2-oxoglutarate binding site. His-277 lines the Fe cation pocket. Zn(2+)-binding residues include Cys-307 and Cys-309. Residues 397 to 510 form a disordered region; the sequence is MCHTSRQAAD…ASEGGLTSDP (114 aa). Over residues 461–471 the composition is skewed to basic and acidic residues; sequence RLPEGRDDRSP.

The protein belongs to the JHDM3 histone demethylase family. It depends on Fe(2+) as a cofactor. Post-translationally, ubiquitinated via 'Lys-63'-linked ubiquitin chains. Deubiquitinated by USP14 with the help of TRIM14 leading to stabilization.

It localises to the nucleus. It carries out the reaction N(6),N(6),N(6)-trimethyl-L-lysyl(9)-[histone H3] + 2 2-oxoglutarate + 2 O2 = N(6)-methyl-L-lysyl(9)-[histone H3] + 2 formaldehyde + 2 succinate + 2 CO2. Its function is as follows. Histone demethylase that specifically demethylates 'Lys-9' of histone H3, thereby playing a central role in histone code. Does not demethylate histone H3 'Lys-4', H3 'Lys-27', H3 'Lys-36' nor H4 'Lys-20'. Demethylates both di- and trimethylated H3 'Lys-9' residue, while it has no activity on monomethylated residues. Demethylation of Lys residue generates formaldehyde and succinate. This chain is Lysine-specific demethylase 4D (Kdm4d), found in Rattus norvegicus (Rat).